A 117-amino-acid chain; its full sequence is Putative membrane protein insertion efficiency factor (117 aa).

Residues 87-117 (RKGGPSAAEPAIEGHIPSSPAAETPSHVQGA) are disordered.

The protein belongs to the UPF0161 family.

It localises to the cell membrane. Its function is as follows. Could be involved in insertion of integral membrane proteins into the membrane. The sequence is that of Putative membrane protein insertion efficiency factor from Streptomyces avermitilis (strain ATCC 31267 / DSM 46492 / JCM 5070 / NBRC 14893 / NCIMB 12804 / NRRL 8165 / MA-4680).